Here is a 307-residue protein sequence, read N- to C-terminus: Ras-related protein Rab-33 (307 aa).

Positions 19 to 80 (VIDPPKHVTA…IPPAPEAVTA (62 aa)) are disordered. Composition is skewed to pro residues over residues 42-56 (PTHPSAPQDPSPAVP) and 65-75 (PTAPPPIPPAP). 107-114 (GNAAVGKT) is a binding site for GTP. The Effector region motif lies at 129 to 137 (TEATIGVDF). GTP-binding positions include 155-159 (DTAGQ) and 217-220 (NKCD). S-geranylgeranyl cysteine attachment occurs at residues C306 and C307.

It belongs to the small GTPase superfamily. Rab family.

Its subcellular location is the cell membrane. The protein is Ras-related protein Rab-33 (rab-33) of Caenorhabditis elegans.